The chain runs to 157 residues: Transmembrane protein 42 (157 aa).

A run of 4 helical transmembrane segments spans residues 37 to 57, 67 to 87, 100 to 120, and 124 to 144; these read FWGVFNCLCAGAFGALAAAAA, IGLCVLGIVAMASANSLMWTF, IASVTVTFSNILCSAILGYLL, and CQEILWWGGVFLILCGLTLIH.

The protein resides in the membrane. This Mus musculus (Mouse) protein is Transmembrane protein 42 (Tmem42).